The primary structure comprises 689 residues: Glycine--tRNA ligase beta subunit (689 aa).

The protein belongs to the class-II aminoacyl-tRNA synthetase family. In terms of assembly, tetramer of two alpha and two beta subunits.

The protein resides in the cytoplasm. The enzyme catalyses tRNA(Gly) + glycine + ATP = glycyl-tRNA(Gly) + AMP + diphosphate. The polypeptide is Glycine--tRNA ligase beta subunit (Shigella boydii serotype 18 (strain CDC 3083-94 / BS512)).